Here is a 317-residue protein sequence, read N- to C-terminus: U5 small nuclear ribonucleoprotein TSSC4 (317 aa).

Residues 1 to 19 are compositionally biased toward acidic residues; it reads MAETEAGLEVEEPTEDDTL. The tract at residues 1–78 is disordered; the sequence is MAETEAGLEV…IPTTAVQPFH (78 aa). Low complexity predominate over residues 20–37; it reads PSDTVSLSDSDSDLSLPS. Phosphoserine occurs at positions 57, 64, 83, and 92. The tract at residues 74 to 101 is hom2; mediates interaction with the U5 snRNP complexes and required for spliceosomal tri-snRNP complex assembly; that stretch reads VQPFHLRGMSSTFSQRSHSIFDCLESAA. Residues 123–151 are disordered; it reads VAPPSQTPARSLSRVHGNTDPTRVHPVPD. The segment at 146-300 is interaction with SNRNP200; sequence VHPVPDYVSH…SKKRSRDHFR (155 aa). Residues 147 to 183 are hom3; mediates interaction with the U5 snRNP complexes; the sequence is HPVPDYVSHPERWTKYSLEDVSETSEQSNRDAALAFL. Residues 198–238 are hom4; necessary for interaction with the PRPF19 complex and required for spliceosomal tri-snRNP complex assembly; that stretch reads FNQDPSSCGEGRVVFTKPVRGSEARAERKRVLKKGVVSGAG. Lys214 bears the N6-acetyllysine mark. Residues 247–317 form a disordered region; that stretch reads HLAGPEAEEW…GPGSERGPSV (71 aa).

Belongs to the TSSC4 family. Interacts in a RNA-independent manner with distinct U5 snRNP-containing complexes, the mono-U5 snRNP and the post-splicing U5 snRNP-PRPF19 complex. Interacts with SNRNP200; the interaction is direct, excludes recruitment of C9ORF78 and WBP4 to SNRNP200 and negatively regulates its RNA helicase activity. Interacts with PRPF8; the interaction is direct.

It localises to the nucleus. Its subcellular location is the cytoplasm. Its function is as follows. Protein associated with the U5 snRNP, during its maturation and its post-splicing recycling and which is required for spliceosomal tri-snRNP complex assembly in the nucleus. Has a molecular sequestering activity and transiently hinders SNRNP200 binding sites for constitutive splicing factors that intervene later during the assembly of the spliceosome and splicing. Together with its molecular sequestering activity, may also function as a molecular adapter and placeholder, coordinating the assembly of the U5 snRNP and its association with the U4/U6 di-snRNP. This Rattus norvegicus (Rat) protein is U5 small nuclear ribonucleoprotein TSSC4.